The chain runs to 137 residues: Sporulation-specific cell division protein SsgB (137 aa).

The protein belongs to the SsgA family. Interacts with SsgA. Interacts with FtsZ (via N-terminus).

The protein resides in the cell septum. Functionally, involved in sporulation-specific cell division. Required for early stages of sporulation. Important in the process of growth cessation prior to sporulation-specific cell division. Recruits cell division protein FtsZ to the future septum sites and tethers the contractile ring structure (Z ring) to the cytoplasmic membrane during sporulation. Stimulates polymerization and filament length of FtsZ in vitro. The sequence is that of Sporulation-specific cell division protein SsgB from Streptomyces coelicolor (strain ATCC BAA-471 / A3(2) / M145).